The chain runs to 501 residues: ATP synthase subunit alpha (501 aa).

169-176 (GDRQTGKT) provides a ligand contact to ATP.

It belongs to the ATPase alpha/beta chains family. In terms of assembly, F-type ATPases have 2 components, CF(1) - the catalytic core - and CF(0) - the membrane proton channel. CF(1) has five subunits: alpha(3), beta(3), gamma(1), delta(1), epsilon(1). CF(0) has three main subunits: a(1), b(2) and c(9-12). The alpha and beta chains form an alternating ring which encloses part of the gamma chain. CF(1) is attached to CF(0) by a central stalk formed by the gamma and epsilon chains, while a peripheral stalk is formed by the delta and b chains.

The protein localises to the cell membrane. It catalyses the reaction ATP + H2O + 4 H(+)(in) = ADP + phosphate + 5 H(+)(out). In terms of biological role, produces ATP from ADP in the presence of a proton gradient across the membrane. The alpha chain is a regulatory subunit. This Streptococcus agalactiae serotype III (strain NEM316) protein is ATP synthase subunit alpha.